Consider the following 229-residue polypeptide: Ribonuclease 3 (229 aa).

The region spanning 5 to 127 is the RNase III domain; that stretch reads LARLERQLGY…LIGAIYLDAG (123 aa). Position 40 (E40) interacts with Mg(2+). The active site involves D44. D113 and E116 together coordinate Mg(2+). E116 is an active-site residue. Positions 154–224 constitute a DRBM domain; it reads DPKTRLQEFL…AAAALIALGV (71 aa).

Belongs to the ribonuclease III family. In terms of assembly, homodimer. Mg(2+) serves as cofactor.

The protein localises to the cytoplasm. The catalysed reaction is Endonucleolytic cleavage to 5'-phosphomonoester.. Its function is as follows. Digests double-stranded RNA. Involved in the processing of primary rRNA transcript to yield the immediate precursors to the large and small rRNAs (23S and 16S). Processes some mRNAs, and tRNAs when they are encoded in the rRNA operon. Processes pre-crRNA and tracrRNA of type II CRISPR loci if present in the organism. The chain is Ribonuclease 3 from Pseudomonas fluorescens (strain SBW25).